Here is a 189-residue protein sequence, read N- to C-terminus: Calcyphosin (189 aa).

EF-hand domains are found at residues 21 to 56 (SGIQGVARFFRRLDQDGSRSLDVRELQRGLAELGLV), 57 to 92 (LDTAEMEGVCRRWDRDGSGTLDLEEFLRALRPPMSQ), 93 to 128 (AREAVVTAAFAKLDRSGDGVVTVDDLRGVYSGRTHP), and 136 to 172 (TEEQVLRHFLDNFDSSEKDGQVTLAEFQDYYSGVSAS). Residues Asp34, Asp36, Ser38, Ser40, Glu45, Asp70, Asp72, Ser74, Thr76, Glu81, Asp106, Ser108, Asp110, and Asp117 each coordinate Ca(2+). Ser40 carries the post-translational modification Phosphoserine; by PKA.

As to quaternary structure, monomer. Does not form oligomers in the presence of calcium.

The protein localises to the cytoplasm. Its function is as follows. Calcium-binding protein. May play a role in cellular signaling events (Potential). This Bos taurus (Bovine) protein is Calcyphosin (CAPS).